The primary structure comprises 249 residues: Tryptophan synthase alpha chain (249 aa).

Catalysis depends on proton acceptor residues Glu-43 and Asp-54.

It belongs to the TrpA family. As to quaternary structure, tetramer of two alpha and two beta chains.

It catalyses the reaction (1S,2R)-1-C-(indol-3-yl)glycerol 3-phosphate + L-serine = D-glyceraldehyde 3-phosphate + L-tryptophan + H2O. The protein operates within amino-acid biosynthesis; L-tryptophan biosynthesis; L-tryptophan from chorismate: step 5/5. Functionally, the alpha subunit is responsible for the aldol cleavage of indoleglycerol phosphate to indole and glyceraldehyde 3-phosphate. This is Tryptophan synthase alpha chain from Campylobacter jejuni subsp. jejuni serotype O:23/36 (strain 81-176).